The sequence spans 194 residues: uncharacterized protein (194 aa).

This is an uncharacterized protein from Acanthamoeba polyphaga (Amoeba).